Consider the following 180-residue polypeptide: MHIEILRLGHRGERDKRISTHVALTSRAIGAKKILFTEEDKHVRESVERIVKSWGGEFKFEVLNSWKSYVKKFKDEGIVIHLTMYGENINNVMTDVKKELAKNSKPVLVIIGAEKVPREAYDLADYNLSVGNQPHSEVAALAIFLDRLTGGTALYSEYNDAKIAVTPSKFEKCVSVEKGK.

S-adenosyl-L-methionine is bound by residues L82, 112–116 (GAEKV), and 130–137 (VGNQPHSE).

Belongs to the aTrm56 family. Homodimer.

The protein localises to the cytoplasm. The catalysed reaction is cytidine(56) in tRNA + S-adenosyl-L-methionine = 2'-O-methylcytidine(56) in tRNA + S-adenosyl-L-homocysteine + H(+). In terms of biological role, specifically catalyzes the AdoMet-dependent 2'-O-ribose methylation of cytidine at position 56 in tRNAs. This chain is tRNA (cytidine(56)-2'-O)-methyltransferase, found in Methanococcus vannielii (strain ATCC 35089 / DSM 1224 / JCM 13029 / OCM 148 / SB).